Consider the following 59-residue polypeptide: Large ribosomal subunit protein bL32 (59 aa).

Positions 1–16 are enriched in basic residues; that stretch reads MAVPKRKTSPSRRGMR. Residues 1–59 are disordered; it reads MAVPKRKTSPSRRGMRRSADALKAPTYVEDKNSGELRRPHHIDLKSGMYRGRQVLEPKE. A compositionally biased stretch (basic and acidic residues) spans 28 to 44; that stretch reads VEDKNSGELRRPHHIDL.

It belongs to the bacterial ribosomal protein bL32 family.

The sequence is that of Large ribosomal subunit protein bL32 from Brucella abortus (strain S19).